The chain runs to 156 residues: Small ribosomal subunit protein uS7 (156 aa).

It belongs to the universal ribosomal protein uS7 family. In terms of assembly, part of the 30S ribosomal subunit. Contacts proteins S9 and S11.

Functionally, one of the primary rRNA binding proteins, it binds directly to 16S rRNA where it nucleates assembly of the head domain of the 30S subunit. Is located at the subunit interface close to the decoding center, probably blocks exit of the E-site tRNA. This chain is Small ribosomal subunit protein uS7, found in Buchnera aphidicola subsp. Acyrthosiphon pisum (strain Tuc7).